Here is a 226-residue protein sequence, read N- to C-terminus: Putative type II restriction enzyme MjaVIP (226 aa).

Belongs to the BsaWI type II restriction endonuclease family.

The catalysed reaction is Endonucleolytic cleavage of DNA to give specific double-stranded fragments with terminal 5'-phosphates.. Functionally, a P subtype restriction enzyme that recognizes the double-stranded sequence 5'-CCGG-3'; the cleavage site is unknown. The protein is Putative type II restriction enzyme MjaVIP (mjaVIRP) of Methanocaldococcus jannaschii (strain ATCC 43067 / DSM 2661 / JAL-1 / JCM 10045 / NBRC 100440) (Methanococcus jannaschii).